Consider the following 156-residue polypeptide: Small ribosomal subunit protein uS7 (156 aa).

It belongs to the universal ribosomal protein uS7 family. Part of the 30S ribosomal subunit. Contacts proteins S9 and S11.

Functionally, one of the primary rRNA binding proteins, it binds directly to 16S rRNA where it nucleates assembly of the head domain of the 30S subunit. Is located at the subunit interface close to the decoding center, probably blocks exit of the E-site tRNA. This is Small ribosomal subunit protein uS7 from Synechococcus sp. (strain CC9902).